Reading from the N-terminus, the 316-residue chain is BTB/POZ domain-containing protein Y57A10B.3 (316 aa).

A signal peptide spans 1 to 21 (MSAMRRCTCFIICLLTSYTYG). Residues asparagine 91, asparagine 107, asparagine 118, asparagine 133, asparagine 191, and asparagine 260 are each glycosylated (N-linked (GlcNAc...) asparagine). The BTB domain maps to 158-226 (RDAVLIVEGK…VHSTATFPND (69 aa)).

The protein resides in the secreted. The protein is BTB/POZ domain-containing protein Y57A10B.3 (btb-14) of Caenorhabditis elegans.